A 269-amino-acid polypeptide reads, in one-letter code: HTH-type transcriptional activator ArnR1 (269 aa).

Residues 1 to 217 (MSSMNKRVFD…LLKLTGSYRY (217 aa)) are Cytoplasmic-facing. The H-T-H motif DNA-binding region spans 42-65 (TTEISQTINTSRKSIIDAIRKLVD). The helical transmembrane segment at 218 to 238 (EIALTKVMLFNVISIPVLMYL) threads the bilayer. Over 239–241 (KDQ) the chain is Extracellular. The helical transmembrane segment at 242–262 (LGILEAIWLYVIILLPLLSIF) threads the bilayer. Residues 263–269 (AEIFNRI) lie on the Cytoplasmic side of the membrane.

The protein localises to the cell membrane. Functionally, involved in regulation of archaellar gene expression. May activate flaB transcription upon nutrient starvation by acting on the flaB promoter. The protein is HTH-type transcriptional activator ArnR1 of Sulfolobus acidocaldarius (strain ATCC 33909 / DSM 639 / JCM 8929 / NBRC 15157 / NCIMB 11770).